A 435-amino-acid polypeptide reads, in one-letter code: UPF0597 protein ASA_0240 (435 aa).

The protein belongs to the UPF0597 family.

The polypeptide is UPF0597 protein ASA_0240 (Aeromonas salmonicida (strain A449)).